The following is an 84-amino-acid chain: Small ribosomal subunit protein uS17 (84 aa).

The protein belongs to the universal ribosomal protein uS17 family. In terms of assembly, part of the 30S ribosomal subunit.

Its function is as follows. One of the primary rRNA binding proteins, it binds specifically to the 5'-end of 16S ribosomal RNA. The chain is Small ribosomal subunit protein uS17 from Moorella thermoacetica (strain ATCC 39073 / JCM 9320).